Reading from the N-terminus, the 542-residue chain is Dihydropyrimidinase (542 aa).

Positions 62, 64, and 167 each coordinate Zn(2+). An N6-carboxylysine modification is found at K167. Y172 is a binding site for substrate. Zn(2+)-binding residues include H199 and H255. A substrate-binding site is contributed by S331. D358 provides a ligand contact to Zn(2+). N392 is a substrate binding site.

The protein belongs to the metallo-dependent hydrolases superfamily. Hydantoinase/dihydropyrimidinase family. Homotetramer. Zn(2+) serves as cofactor. Carboxylation allows a single lysine to coordinate two zinc ions.

It catalyses the reaction 5,6-dihydrouracil + H2O = 3-(carbamoylamino)propanoate + H(+). In terms of biological role, catalyzes the second step of the reductive pyrimidine degradation, the reversible hydrolytic ring opening of dihydropyrimidines. Can catalyze the ring opening of 5,6-dihydrouracil to N-carbamyl-alanine and of 5,6-dihydrothymine to N-carbamyl-amino isobutyrate. This is Dihydropyrimidinase (PYD2) from Lachancea kluyveri (strain ATCC 58438 / CBS 3082 / BCRC 21498 / NBRC 1685 / JCM 7257 / NCYC 543 / NRRL Y-12651) (Yeast).